The following is a 120-amino-acid chain: NADH dehydrogenase [ubiquinone] 1 subunit C2 (120 aa).

A helical transmembrane segment spans residues 57-76; the sequence is GLHRQLLFVTSFVFAGYFYL.

This sequence belongs to the complex I NDUFC2 subunit family. Complex I is composed of 45 different subunits. Interacts with TMEM242.

It localises to the mitochondrion inner membrane. In terms of biological role, accessory subunit of the mitochondrial membrane respiratory chain NADH dehydrogenase (Complex I), that is believed not to be involved in catalysis but required for the complex assembly. Complex I functions in the transfer of electrons from NADH to the respiratory chain. The immediate electron acceptor for the enzyme is believed to be ubiquinone. This chain is NADH dehydrogenase [ubiquinone] 1 subunit C2, found in Mus musculus (Mouse).